The chain runs to 516 residues: Putative transposase y4bL/y4kJ/y4tB (516 aa).

Residues 15 to 96 (IRTILRLTHE…PDWALVVREL (82 aa)) form the HTH IS408-type domain. An Integrase catalytic domain is found at 138-319 (FRNRHAAGAV…SRRELFEEIE (182 aa)). The disordered stretch occupies residues 493–516 (ERPQAEHAAPTPAHTNIRGRSYYQ).

Belongs to the transposase IS21/IS408/IS1162 family.

The protein is Putative transposase y4bL/y4kJ/y4tB of Sinorhizobium fredii (strain NBRC 101917 / NGR234).